The sequence spans 484 residues: Ribosomal RNA small subunit methyltransferase F (484 aa).

S-adenosyl-L-methionine contacts are provided by residues 126–132 (AAAPGSK), Glu150, Asp177, and Asp195. Cys248 acts as the Nucleophile in catalysis.

This sequence belongs to the class I-like SAM-binding methyltransferase superfamily. RsmB/NOP family.

It is found in the cytoplasm. It carries out the reaction cytidine(1407) in 16S rRNA + S-adenosyl-L-methionine = 5-methylcytidine(1407) in 16S rRNA + S-adenosyl-L-homocysteine + H(+). Functionally, specifically methylates the cytosine at position 1407 (m5C1407) of 16S rRNA. This chain is Ribosomal RNA small subunit methyltransferase F, found in Pectobacterium atrosepticum (strain SCRI 1043 / ATCC BAA-672) (Erwinia carotovora subsp. atroseptica).